The sequence spans 125 residues: Protein ApaG (125 aa).

The region spanning 1–125 (MIEQPRICVQ…FRLAIPALIH (125 aa)) is the ApaG domain.

The polypeptide is Protein ApaG (Yersinia pestis bv. Antiqua (strain Antiqua)).